Consider the following 312-residue polypeptide: Short chain dehydrogenase pgmD (312 aa).

NADP(+) contacts are provided by V46, I47, K171, Y207, K211, and T242. Y207 serves as the catalytic Proton donor. Residue K211 is the Lowers pKa of active site Tyr of the active site.

Belongs to the short-chain dehydrogenases/reductases (SDR) family.

It participates in pigment biosynthesis. The protein operates within secondary metabolite biosynthesis. Its function is as follows. Short chain dehydrogenase; part of the gene cluster that mediates the biosynthesis of pleosporalin A, ascomycone A, as well as a third cryptic naphthoquinone derived pigment, all responsible for the coloration of conidia. Essential for the production of pleosporalin A, but not the 2 other final products. The pathway begins with the biosynthesis of the cyclized heptaketide 3-acetonyl-1,6,8-trihydroxy-2-naphthaldehyde by the NR-PKS pgmA. The C-6 hydroxyl group is further methylated by the O-methyltransferase pgmB to yield fusarubinaldehyde which is in turn oxidized by the cytochrome P450 monooxygenase pgmC at C-9. The C-1 hydroxyl group is then methylated spontaneously. Although pgmE, pgmD and pgmH are essential for the production of pleosporalin A, it is not the case for the 2 other final products and it remains difficult to assign a specific function to each enzyme. PgmF and pgmG seem not to be involved in pigment biosynthesis although they were regulated by the cluster-specific transcription factor pgmR. This chain is Short chain dehydrogenase pgmD, found in Aspergillus terreus.